Here is a 154-residue protein sequence, read N- to C-terminus: Calmodulin-like protein 6 (154 aa).

EF-hand domains are found at residues 1–36 (MDST…LGII), 37–72 (IPED…IMVE), 77–112 (VGEE…LGLK), and 115–150 (KTLE…GRFF). Asp14, Asp16, Asp18, Lys20, Glu25, Asp50, Asn52, Asp54, Cys56, Glu61, Asp90, Asn92, Asp94, Glu101, Asp128, Asp130, Asp132, Arg134, and Glu139 together coordinate Ca(2+).

Belongs to the calmodulin family.

Potential calcium sensor. In Arabidopsis thaliana (Mouse-ear cress), this protein is Calmodulin-like protein 6 (CML6).